Consider the following 1449-residue polypeptide: Disease resistance protein RPP5 (1449 aa).

The 169-residue stretch at 10–178 folds into the TIR domain; that stretch reads RRYDVFPSFS…KISNDVSNKL (169 aa). Residue glutamate 85 is part of the active site. One can recognise an NB-ARC domain in the interval 192–446; the sequence is EAHIEAIKSV…IACLFNGFEV (255 aa). LRR repeat units lie at residues 549–573, 574–595, 597–618, 619–642, 644–665, 687–710, 712–732, 733–755, 756–779, 802–825, 826–849, 915–939, 941–962, 963–985, 986–1011, 1028–1052, 1053–1077, 1096–1119, and 1120–1143; these read MRNLQYLKIGDWSDGGQPQSLVYLP, LKLRLLDWDDCPLKSLPSTFKA, YLVNLIMKYSKLEKLWEGTLPL, GSLKKMNLLCSKNLKEIPDLSNAR, LEELDLEGCESLVTLPSSIQNA, MCNLEYLSVDCSRVEGTQGIVYFP, KLRLLLWNNCPLKRLHSNFKV, EYLVKLRMENSDLEKLWDGTQPL, GRLKQMFLRGSKYLKEIPDLSLAI, AIKLIYLDISDCKKLESFPTDLNL, ESLEYLNLTGCPNLRNFPAIKMGC, LGSLEEMDLSESENLTEIPDLSKAT, LKHLYLNNCKSLVTLPSTIGNL, QKLVRLEMKECTGLEVLPTDVNL, SSLETLDLSGCSSLRTFPLISKSIKW, ATKLESLILNNCKSLVTLPSTIGNL, QNLRRLYMKRCTGLEVLPTDVNLSS, STNIVWLYLENTAIGEVPCCIEDF, and TRLRVLLMYCCQRLKNISPNIFRL.

In terms of assembly, interacts with RSH1.

The catalysed reaction is NAD(+) + H2O = ADP-D-ribose + nicotinamide + H(+). TIR-NB-LRR receptor-like protein that confers resistance to the pathogen Hyaloperonospora arabidopsis isolate Noco2 (downy mildew disease). Confers resistance to H.arabidopsis isolates Emoy2, Emwa1 and Noco2. The sequence is that of Disease resistance protein RPP5 from Arabidopsis thaliana (Mouse-ear cress).